We begin with the raw amino-acid sequence, 493 residues long: E3 ubiquitin-protein ligase TRIM35 (493 aa).

Met1 carries the N-acetylmethionine modification. Phosphoserine is present on residues Ser4 and Ser8. The RING-type zinc-finger motif lies at 21 to 61 (CAVCYDPFRDAVTLRCGHNFCRGCVSRCWEVQVSPTCPVCK). The B box-type zinc-finger motif lies at 96–137 (RFSRVCRLHRGQLSLFCLEDKELLCCSCQADPRHQGHRVQPV). 4 residues coordinate Zn(2+): Cys101, His104, Cys123, and His129. Positions 210-251 (AEETRQKQLLADEKMKQLTEETEVLAHEIERLQMEMKEDDVS) form a coiled coil. Residues 284–487 (LGSLQYRVWK…LRICPLHISV (204 aa)) enclose the B30.2/SPRY domain.

This sequence belongs to the TRIM/RBCC family. In terms of assembly, interacts with PKM isoform M2, but not isoform M1; this interaction may compete with that between PKM and FGFR1, and hence reduces FGFR1-dependent tyrosine phosphorylation of PKM. Interacts with IRF7; this interaction promotes IRF7 proteasomal degradation. Interacts with TRAF3; this interaction promotes TRAF3 activation.

Its subcellular location is the cytoplasm. The protein localises to the nucleus. It catalyses the reaction S-ubiquitinyl-[E2 ubiquitin-conjugating enzyme]-L-cysteine + [acceptor protein]-L-lysine = [E2 ubiquitin-conjugating enzyme]-L-cysteine + N(6)-ubiquitinyl-[acceptor protein]-L-lysine.. Its pathway is protein modification; protein ubiquitination. In terms of biological role, E3 ubiquitin-protein ligase that participates in multiple biological processes including cell death, glucose metabolism, and in particular, the innate immune response. Mediates 'Lys-63'-linked polyubiquitination of TRAF3 thereby promoting type I interferon production via RIG-I signaling pathway. Can also catalyze 'Lys-48'-linked polyubiquitination and proteasomal degradation of viral proteins such as influenza virus PB2. Acts as a negative feedback regulator of TLR7- and TLR9-triggered signaling. Mechanistically, promotes the 'Lys-48'-linked ubiquitination of IRF7 and induces its degradation via a proteasome-dependent pathway. Reduces FGFR1-dependent tyrosine phosphorylation of PKM, inhibiting PKM-dependent lactate production, glucose metabolism, and cell growth. The sequence is that of E3 ubiquitin-protein ligase TRIM35 (TRIM35) from Homo sapiens (Human).